A 75-amino-acid chain; its full sequence is Mitotic-spindle organizing protein 1 (75 aa).

It belongs to the MOZART1 family. Part of the gamma-tubulin complex.

It is found in the cytoplasm. It localises to the cytoskeleton. Its subcellular location is the microtubule organizing center. The protein localises to the centrosome. The protein resides in the spindle. In terms of biological role, required for gamma-tubulin complex recruitment to the centrosome. This chain is Mitotic-spindle organizing protein 1 (mzt1), found in Danio rerio (Zebrafish).